The chain runs to 137 residues: MPRRHQPEKHPGGSHRQLRVAETVRHAIADILAQGQVHDPVLEGHLVTVPEVRMSADLKLATIYVMPLGGRDTADVIDALDRNRKFLRGEIARRVNLKFAPDIRFRVDERFDEAERIEKLLRTPAVQRDLAPDTDES.

This sequence belongs to the RbfA family. In terms of assembly, monomer. Binds 30S ribosomal subunits, but not 50S ribosomal subunits or 70S ribosomes.

It localises to the cytoplasm. Its function is as follows. One of several proteins that assist in the late maturation steps of the functional core of the 30S ribosomal subunit. Associates with free 30S ribosomal subunits (but not with 30S subunits that are part of 70S ribosomes or polysomes). Required for efficient processing of 16S rRNA. May interact with the 5'-terminal helix region of 16S rRNA. In Nitrobacter winogradskyi (strain ATCC 25391 / DSM 10237 / CIP 104748 / NCIMB 11846 / Nb-255), this protein is Ribosome-binding factor A.